A 287-amino-acid polypeptide reads, in one-letter code: Urease accessory protein UreD (287 aa).

Belongs to the UreD family. In terms of assembly, ureD, UreF and UreG form a complex that acts as a GTP-hydrolysis-dependent molecular chaperone, activating the urease apoprotein by helping to assemble the nickel containing metallocenter of UreC. The UreE protein probably delivers the nickel.

It localises to the cytoplasm. In terms of biological role, required for maturation of urease via the functional incorporation of the urease nickel metallocenter. This chain is Urease accessory protein UreD, found in Aliivibrio fischeri (strain MJ11) (Vibrio fischeri).